The following is a 181-amino-acid chain: Protein canopy homolog 1 (181 aa).

The N-terminal stretch at 1–21 (MAILLHFGVLITAFLSSHVEG) is a signal peptide. The 153-residue stretch at 25-177 (PILYCGACRA…EETGLCKEYL (153 aa)) folds into the Saposin B-type domain. 3 disulfide bridges follow: cysteine 29/cysteine 173, cysteine 32/cysteine 166, and cysteine 87/cysteine 139. The Prevents secretion from ER motif lies at 178 to 181 (HNEL).

Belongs to the canopy family.

The protein localises to the endoplasmic reticulum. Its function is as follows. Plays an role in early embryonic development. The chain is Protein canopy homolog 1 (cnpy1) from Xenopus laevis (African clawed frog).